Consider the following 371-residue polypeptide: Geranylgeranyl transferase type-2 subunit alpha (371 aa).

5 PFTA repeats span residues 45-79 (YSDE…NNYS), 92-126 (ILNQ…ELVK), 131-165 (NWKY…NMEL), 177-211 (INLD…KIYN), and 242-276 (LLKN…DDLF).

It belongs to the protein prenyltransferase subunit alpha family. In terms of assembly, heterodimer of an alpha and a beta subunit.

It catalyses the reaction geranylgeranyl diphosphate + L-cysteinyl-[protein] = S-geranylgeranyl-L-cysteinyl-[protein] + diphosphate. Functionally, catalyzes the transfer of a geranyl-geranyl moiety from geranyl-geranyl pyrophosphate to proteins having the C-terminal -XCC or -XCXC, where both cysteines may become modified. Acts on YPT1 and SEC4. The protein is Geranylgeranyl transferase type-2 subunit alpha (BET4) of Candida albicans (Yeast).